The sequence spans 447 residues: Dimethylsulfoniopropionate lyase DddP (447 aa).

The segment at 1-26 is disordered; that stretch reads MNRHFNATRKIDPSRGATLGDGSPND. A divalent metal cation contacts are provided by Asp295, Asp297, Asp307, His371, Glu406, and Glu421.

This sequence belongs to the peptidase M24B family. Homodimer. A divalent metal cation is required as a cofactor.

It carries out the reaction S,S-dimethyl-beta-propiothetin = acrylate + dimethyl sulfide + H(+). Functionally, able to cleave dimethylsulfoniopropionate (DMSP), releasing dimethyl sulfide (DMS). DMS is the principal form by which sulfur is transported from oceans to the atmosphere. The real activity of the protein is however subject to debate and it is unclear whether it constitutes a real dimethylsulfoniopropionate lyase in vivo: the low activity with DMSP as substrate suggests that DMSP is not its native substrate. In Roseobacter denitrificans (strain ATCC 33942 / OCh 114) (Erythrobacter sp. (strain OCh 114)), this protein is Dimethylsulfoniopropionate lyase DddP.